The following is a 109-amino-acid chain: UPF0122 protein ABC2295 (109 aa).

Belongs to the UPF0122 family.

Might take part in the signal recognition particle (SRP) pathway. This is inferred from the conservation of its genetic proximity to ftsY/ffh. May be a regulatory protein. The protein is UPF0122 protein ABC2295 of Shouchella clausii (strain KSM-K16) (Alkalihalobacillus clausii).